A 128-amino-acid chain; its full sequence is Small ribosomal subunit protein eS8 (128 aa).

The protein belongs to the eukaryotic ribosomal protein eS8 family. Part of the 30S ribosomal subunit.

The chain is Small ribosomal subunit protein eS8 from Methanococcus aeolicus (strain ATCC BAA-1280 / DSM 17508 / OCM 812 / Nankai-3).